The chain runs to 20 residues: ATP synthase subunit beta, chloroplastic (20 aa).

The segment covering 1–10 (METTNESLGY) has biased composition (polar residues). Positions 1–20 (METTNESLGYTDQIIGPVLD) are disordered.

The protein belongs to the ATPase alpha/beta chains family. As to quaternary structure, F-type ATPases have 2 components, CF(1) - the catalytic core - and CF(0) - the membrane proton channel. CF(1) has five subunits: alpha(3), beta(3), gamma(1), delta(1), epsilon(1). CF(0) has four main subunits: a(1), b(1), b'(1) and c(9-12).

It is found in the plastid. Its subcellular location is the chloroplast thylakoid membrane. The enzyme catalyses ATP + H2O + 4 H(+)(in) = ADP + phosphate + 5 H(+)(out). Its function is as follows. Produces ATP from ADP in the presence of a proton gradient across the membrane. The catalytic sites are hosted primarily by the beta subunits. The chain is ATP synthase subunit beta, chloroplastic from Chattonella marina var. antiqua (Red tide flagellate).